Here is a 550-residue protein sequence, read N- to C-terminus: Chaperonin GroEL (550 aa).

ATP-binding positions include 30–33 (TLGP), K51, 87–91 (DGTTT), G415, and D495.

Belongs to the chaperonin (HSP60) family. As to quaternary structure, forms a cylinder of 14 subunits composed of two heptameric rings stacked back-to-back. Interacts with the co-chaperonin GroES.

Its subcellular location is the cytoplasm. It carries out the reaction ATP + H2O + a folded polypeptide = ADP + phosphate + an unfolded polypeptide.. In terms of biological role, together with its co-chaperonin GroES, plays an essential role in assisting protein folding. The GroEL-GroES system forms a nano-cage that allows encapsulation of the non-native substrate proteins and provides a physical environment optimized to promote and accelerate protein folding. The chain is Chaperonin GroEL from Dechloromonas aromatica (strain RCB).